The sequence spans 157 residues: Protein Smg homolog (157 aa).

It belongs to the Smg family.

The polypeptide is Protein Smg homolog (Aliivibrio fischeri (strain MJ11) (Vibrio fischeri)).